Reading from the N-terminus, the 90-residue chain is DNA-binding protein HU-alpha (90 aa).

This sequence belongs to the bacterial histone-like protein family. Heterodimer of an alpha and a beta chain.

Histone-like DNA-binding protein which is capable of wrapping DNA to stabilize it, and thus to prevent its denaturation under extreme environmental conditions. This chain is DNA-binding protein HU-alpha (hupA), found in Pseudomonas aeruginosa (strain ATCC 15692 / DSM 22644 / CIP 104116 / JCM 14847 / LMG 12228 / 1C / PRS 101 / PAO1).